The primary structure comprises 351 residues: Histidinol-phosphate aminotransferase 2 (351 aa).

Lysine 210 carries the post-translational modification N6-(pyridoxal phosphate)lysine.

This sequence belongs to the class-II pyridoxal-phosphate-dependent aminotransferase family. Histidinol-phosphate aminotransferase subfamily. Homodimer. Pyridoxal 5'-phosphate is required as a cofactor.

The enzyme catalyses L-histidinol phosphate + 2-oxoglutarate = 3-(imidazol-4-yl)-2-oxopropyl phosphate + L-glutamate. It functions in the pathway amino-acid biosynthesis; L-histidine biosynthesis; L-histidine from 5-phospho-alpha-D-ribose 1-diphosphate: step 7/9. This Rhizobium meliloti (strain 1021) (Ensifer meliloti) protein is Histidinol-phosphate aminotransferase 2 (hisC2).